Consider the following 482-residue polypeptide: Cobyric acid synthase (482 aa).

Residues 249–436 (QCKIACLALS…LHGLFTSDDF (188 aa)) form the GATase cobBQ-type domain. The active-site Nucleophile is C331. Residue H428 is part of the active site.

The protein belongs to the CobB/CobQ family. CobQ subfamily.

It functions in the pathway cofactor biosynthesis; adenosylcobalamin biosynthesis. Functionally, catalyzes amidations at positions B, D, E, and G on adenosylcobyrinic A,C-diamide. NH(2) groups are provided by glutamine, and one molecule of ATP is hydrogenolyzed for each amidation. The polypeptide is Cobyric acid synthase (Bradyrhizobium diazoefficiens (strain JCM 10833 / BCRC 13528 / IAM 13628 / NBRC 14792 / USDA 110)).